The chain runs to 426 residues: L-cysteine:1D-myo-inositol 2-amino-2-deoxy-alpha-D-glucopyranoside ligase (426 aa).

A Zn(2+)-binding site is contributed by Cys-43. Residues 43–46 (CGIT), Ser-58, and 81–83 (NVT) contribute to the L-cysteinyl-5'-AMP site. Positions 45 to 55 (ITPYDATHMGH) match the 'HIGH' region motif. A 'ERGGDP' region motif is present at residues 200 to 205 (ERGGDP). Trp-241 contacts L-cysteinyl-5'-AMP. Cys-245 serves as a coordination point for Zn(2+). L-cysteinyl-5'-AMP is bound at residue 263–265 (GSD). His-270 is a Zn(2+) binding site. Residue Val-296 coordinates L-cysteinyl-5'-AMP. A 'KMSKS' region motif is present at residues 302 to 306 (KMSKS).

The protein belongs to the class-I aminoacyl-tRNA synthetase family. MshC subfamily. As to quaternary structure, monomer. Requires Zn(2+) as cofactor.

It carries out the reaction 1D-myo-inositol 2-amino-2-deoxy-alpha-D-glucopyranoside + L-cysteine + ATP = 1D-myo-inositol 2-(L-cysteinylamino)-2-deoxy-alpha-D-glucopyranoside + AMP + diphosphate + H(+). Its function is as follows. Catalyzes the ATP-dependent condensation of GlcN-Ins and L-cysteine to form L-Cys-GlcN-Ins. The polypeptide is L-cysteine:1D-myo-inositol 2-amino-2-deoxy-alpha-D-glucopyranoside ligase (Arthrobacter sp. (strain FB24)).